A 207-amino-acid polypeptide reads, in one-letter code: N-(5'-phosphoribosyl)anthranilate isomerase (207 aa).

This sequence belongs to the TrpF family.

The enzyme catalyses N-(5-phospho-beta-D-ribosyl)anthranilate = 1-(2-carboxyphenylamino)-1-deoxy-D-ribulose 5-phosphate. It participates in amino-acid biosynthesis; L-tryptophan biosynthesis; L-tryptophan from chorismate: step 3/5. The chain is N-(5'-phosphoribosyl)anthranilate isomerase from Legionella pneumophila subsp. pneumophila (strain Philadelphia 1 / ATCC 33152 / DSM 7513).